Reading from the N-terminus, the 340-residue chain is Glyceraldehyde-3-phosphate dehydrogenase (340 aa).

NAD(+) is bound by residues 11–12 (TI) and glycine 109. A D-glyceraldehyde 3-phosphate-binding site is contributed by 138-140 (SCN). The Nucleophile role is filled by cysteine 139. Arginine 167 contacts NAD(+). 193–194 (HA) contributes to the D-glyceraldehyde 3-phosphate binding site. Glutamine 300 is a binding site for NAD(+).

It belongs to the glyceraldehyde-3-phosphate dehydrogenase family. As to quaternary structure, homotetramer.

It localises to the cytoplasm. The enzyme catalyses D-glyceraldehyde 3-phosphate + phosphate + NADP(+) = (2R)-3-phospho-glyceroyl phosphate + NADPH + H(+). It carries out the reaction D-glyceraldehyde 3-phosphate + phosphate + NAD(+) = (2R)-3-phospho-glyceroyl phosphate + NADH + H(+). The protein operates within carbohydrate degradation; glycolysis; pyruvate from D-glyceraldehyde 3-phosphate: step 1/5. The protein is Glyceraldehyde-3-phosphate dehydrogenase of Metallosphaera sedula (strain ATCC 51363 / DSM 5348 / JCM 9185 / NBRC 15509 / TH2).